The primary structure comprises 122 residues: Large ribosomal subunit protein uL14 (122 aa).

The protein belongs to the universal ribosomal protein uL14 family. In terms of assembly, part of the 50S ribosomal subunit. Forms a cluster with proteins L3 and L19. In the 70S ribosome, L14 and L19 interact and together make contacts with the 16S rRNA in bridges B5 and B8.

Binds to 23S rRNA. Forms part of two intersubunit bridges in the 70S ribosome. The sequence is that of Large ribosomal subunit protein uL14 from Chlorobium phaeobacteroides (strain BS1).